We begin with the raw amino-acid sequence, 209 residues long: Mediator of RNA polymerase II transcription subunit 20 (209 aa).

The protein belongs to the Mediator complex subunit 20 family. Component of the Mediator complex.

It localises to the nucleus. In terms of biological role, component of the Mediator complex, a coactivator involved in the regulated transcription of nearly all RNA polymerase II-dependent genes. Mediator functions as a bridge to convey information from gene-specific regulatory proteins to the basal RNA polymerase II transcription machinery. Mediator is recruited to promoters by direct interactions with regulatory proteins and serves as a scaffold for the assembly of a functional preinitiation complex with RNA polymerase II and the general transcription factors. This chain is Mediator of RNA polymerase II transcription subunit 20 (SRB2), found in Eremothecium gossypii (strain ATCC 10895 / CBS 109.51 / FGSC 9923 / NRRL Y-1056) (Yeast).